Consider the following 283-residue polypeptide: Quinate/shikimate dehydrogenase (NAD(+)) (283 aa).

Serine 17, threonine 69, lysine 73, asparagine 94, and aspartate 110 together coordinate shikimate. Residues serine 17–threonine 19, threonine 69, lysine 73, asparagine 94, and aspartate 110 contribute to the L-quinate site. Lysine 73 acts as the Proton acceptor in catalysis. NAD(+) is bound by residues glycine 137–valine 138, aspartate 158, arginine 163, proline 203–methionine 206, alanine 213, valine 228, and glycine 251. Glutamine 258 serves as a coordination point for shikimate. An L-quinate-binding site is contributed by glutamine 258.

This sequence belongs to the shikimate dehydrogenase family. Homodimer.

It carries out the reaction L-quinate + NAD(+) = 3-dehydroquinate + NADH + H(+). It catalyses the reaction shikimate + NAD(+) = 3-dehydroshikimate + NADH + H(+). It participates in metabolic intermediate biosynthesis; chorismate biosynthesis; chorismate from D-erythrose 4-phosphate and phosphoenolpyruvate: step 4/7. The protein operates within aromatic compound metabolism; 3,4-dihydroxybenzoate biosynthesis; 3-dehydroquinate from D-quinate (NAD(+) route). Involved in the biosynthesis of the chorismate, which leads to the biosynthesis of aromatic amino acids, and plays a key role in the quinate degradation pathway. Catalyzes the NAD(+)-dependent oxidation of both quinate and shikimate to 3-dehydroquinate and 3-dehydroshikimate, respectively. It can only use NAD. The protein is Quinate/shikimate dehydrogenase (NAD(+)) of Corynebacterium glutamicum (strain ATCC 13032 / DSM 20300 / JCM 1318 / BCRC 11384 / CCUG 27702 / LMG 3730 / NBRC 12168 / NCIMB 10025 / NRRL B-2784 / 534).